Reading from the N-terminus, the 122-residue chain is Large ribosomal subunit protein bL12 (122 aa).

Belongs to the bacterial ribosomal protein bL12 family. In terms of assembly, homodimer. Part of the ribosomal stalk of the 50S ribosomal subunit. Forms a multimeric L10(L12)X complex, where L10 forms an elongated spine to which 2 to 4 L12 dimers bind in a sequential fashion. Binds GTP-bound translation factors.

Functionally, forms part of the ribosomal stalk which helps the ribosome interact with GTP-bound translation factors. Is thus essential for accurate translation. This chain is Large ribosomal subunit protein bL12, found in Clostridium botulinum (strain Langeland / NCTC 10281 / Type F).